A 151-amino-acid polypeptide reads, in one-letter code: Deoxyuridine 5'-triphosphate nucleotidohydrolase (151 aa).

Substrate contacts are provided by residues 70-72 (RSG), Asn-83, 87-89 (LID), and Met-97.

The protein belongs to the dUTPase family. Mg(2+) is required as a cofactor.

It catalyses the reaction dUTP + H2O = dUMP + diphosphate + H(+). The protein operates within pyrimidine metabolism; dUMP biosynthesis; dUMP from dCTP (dUTP route): step 2/2. Its function is as follows. This enzyme is involved in nucleotide metabolism: it produces dUMP, the immediate precursor of thymidine nucleotides and it decreases the intracellular concentration of dUTP so that uracil cannot be incorporated into DNA. This Actinobacillus pleuropneumoniae serotype 7 (strain AP76) protein is Deoxyuridine 5'-triphosphate nucleotidohydrolase.